Consider the following 479-residue polypeptide: Membrane-bound lytic murein transglycosylase F (479 aa).

Positions 1–18 (MKGLFIRIVLAICLSLWA) are cleaved as a signal peptide. The segment at 19–266 (IDMVFPWQQI…RIEEKYFNHL (248 aa)) is non-LT domain. The tract at residues 267-479 (NQFDYVDTRS…ISTQTQQEQR (213 aa)) is LT domain. E311 is an active-site residue.

It in the N-terminal section; belongs to the bacterial solute-binding protein 3 family. This sequence in the C-terminal section; belongs to the transglycosylase Slt family.

The protein resides in the cell outer membrane. It carries out the reaction Exolytic cleavage of the (1-&gt;4)-beta-glycosidic linkage between N-acetylmuramic acid (MurNAc) and N-acetylglucosamine (GlcNAc) residues in peptidoglycan, from either the reducing or the non-reducing ends of the peptidoglycan chains, with concomitant formation of a 1,6-anhydrobond in the MurNAc residue.. Its function is as follows. Murein-degrading enzyme that degrades murein glycan strands and insoluble, high-molecular weight murein sacculi, with the concomitant formation of a 1,6-anhydromuramoyl product. Lytic transglycosylases (LTs) play an integral role in the metabolism of the peptidoglycan (PG) sacculus. Their lytic action creates space within the PG sacculus to allow for its expansion as well as for the insertion of various structures such as secretion systems and flagella. The chain is Membrane-bound lytic murein transglycosylase F from Histophilus somni (strain 2336) (Haemophilus somnus).